The chain runs to 254 residues: Probable triosephosphate isomerase 2 (254 aa).

A substrate-binding site is contributed by 9–11 (NMK). His96 functions as the Electrophile in the catalytic mechanism. The Proton acceptor role is filled by Glu168. The substrate site is built by Gly174 and Ser212.

The protein belongs to the triosephosphate isomerase family. As to quaternary structure, homodimer.

The protein resides in the cytoplasm. It carries out the reaction D-glyceraldehyde 3-phosphate = dihydroxyacetone phosphate. Its pathway is carbohydrate biosynthesis; gluconeogenesis. The protein operates within carbohydrate degradation; glycolysis; D-glyceraldehyde 3-phosphate from glycerone phosphate: step 1/1. Its function is as follows. Involved in the gluconeogenesis. Catalyzes stereospecifically the conversion of dihydroxyacetone phosphate (DHAP) to D-glyceraldehyde-3-phosphate (G3P). This Listeria monocytogenes serovar 1/2a (strain ATCC BAA-679 / EGD-e) protein is Probable triosephosphate isomerase 2.